We begin with the raw amino-acid sequence, 103 residues long: Small ribosomal subunit protein uS10 (103 aa).

Belongs to the universal ribosomal protein uS10 family. In terms of assembly, part of the 30S ribosomal subunit.

Its function is as follows. Involved in the binding of tRNA to the ribosomes. The sequence is that of Small ribosomal subunit protein uS10 from Vibrio campbellii (strain ATCC BAA-1116).